The following is a 950-amino-acid chain: Protocadherin alpha-3 (950 aa).

The signal sequence occupies residues Met-1–Gly-29. Cadherin domains are found at residues Gln-30 to Phe-133, Pro-134 to Phe-242, Glu-243 to Leu-350, Val-351 to Phe-455, Ser-456 to Leu-565, and Val-581 to Ala-678. Topologically, residues Gln-30 to Asn-697 are extracellular. N-linked (GlcNAc...) asparagine glycans are attached at residues Asn-257 and Asn-265. An N-linked (GlcNAc...) asparagine glycan is attached at Asn-548. Residues Val-698–Tyr-718 form a helical membrane-spanning segment. The Cytoplasmic segment spans residues Thr-719–Gln-950. 2 PXXP repeats span residues Pro-734–Pro-737 and Pro-774–Pro-777. The tract at residues Pro-734–Pro-894 is 6 X 4 AA repeats of P-X-X-P. Disordered stretches follow at residues Pro-777–Trp-806, Gly-831–Pro-856, and Phe-869–Gln-950. The segment covering Ser-782 to Ala-797 has biased composition (basic and acidic residues). 4 PXXP repeats span residues Pro-799–Pro-802, Pro-832–Pro-835, Pro-873–Pro-876, and Pro-891–Pro-894. Positions Asp-909 to Lys-923 are enriched in basic and acidic residues.

It is found in the cell membrane. Its function is as follows. Potential calcium-dependent cell-adhesion protein. May be involved in the establishment and maintenance of specific neuronal connections in the brain. This is Protocadherin alpha-3 (PCDHA3) from Homo sapiens (Human).